We begin with the raw amino-acid sequence, 31 residues long: L-amino-acid oxidase (31 aa).

This sequence belongs to the flavin monoamine oxidase family. FIG1 subfamily. Homodimer; non-covalently linked. It depends on FAD as a cofactor. Post-translationally, N-glycosylated. In terms of tissue distribution, expressed by the venom gland.

Its subcellular location is the secreted. It catalyses the reaction an L-alpha-amino acid + O2 + H2O = a 2-oxocarboxylate + H2O2 + NH4(+). The catalysed reaction is L-leucine + O2 + H2O = 4-methyl-2-oxopentanoate + H2O2 + NH4(+). The enzyme catalyses L-phenylalanine + O2 + H2O = 3-phenylpyruvate + H2O2 + NH4(+). It carries out the reaction L-histidine + O2 + H2O = 3-(imidazol-5-yl)pyruvate + H2O2 + NH4(+). Its function is as follows. Catalyzes an oxidative deamination of predominantly hydrophobic and aromatic L-amino acids, thus producing hydrogen peroxide that may contribute to the diverse toxic effects of this enzyme. Is moderately active on L-Leu, L-His, and L-Phe, and very weakly active on L-Thr, and L-Cys. Exhibits diverse biological activities, such as hemorrhage, hemolysis, edema, antibacterial and antiparasitic activities, as well as regulation of platelet aggregation. Its effect on platelets is controversial, since it either induces aggregation or inhibits agonist-induced aggregation. These different effects are probably due to different experimental conditions. Inhibits growth of B.subtilis strain ATCC 6633 (MIC=32 uM), E.faecalis strain ATCC 12953 (MIC=32 uM), S.aureus strain ATCC 29213 (MIC=32 uM), S.pyogenes strain ATCC 19615 (MIC=8 uM), E.coli strain ATCC 8739 (MIC=4 uM), K.pneumoniae strain ATCC 13885 (MIC=2 uM), P.mirabilis strain ATCC 25933 (MIC=2 uM), P.aeruginosa strain ATCC 15442 (MIC=8 uM) and S.typhimurium strain ATCC 14028 (MIC=8 uM). In Bothrops mattogrossensis (Pitviper), this protein is L-amino-acid oxidase.